Here is a 211-residue protein sequence, read N- to C-terminus: 5-formyltetrahydrofolate cyclo-ligase (211 aa).

4–8 (KQLLR) is an ATP binding site. Substrate-binding positions include glutamate 56 and 152 to 156 (HGAGY). Residues 151–158 (GHGAGYYD) and aspartate 194 each bind ATP.

It belongs to the 5-formyltetrahydrofolate cyclo-ligase family. In terms of processing, N-glycosylated.

Its subcellular location is the mitochondrion. The catalysed reaction is (6S)-5-formyl-5,6,7,8-tetrahydrofolate + ATP = (6R)-5,10-methenyltetrahydrofolate + ADP + phosphate. In terms of biological role, only enzyme known to utilize 5-formyltetrahydrofolate (folinic acid) as substrate. Contributes to tetrahydrofolate metabolism in an alternative way of folate biosynthesis. May regulate carbon flow through the folate-dependent one-carbon metabolic network that supplies carbon for the biosynthesis of purines, thymidine and amino acids. The chain is 5-formyltetrahydrofolate cyclo-ligase (FAU1) from Saccharomyces cerevisiae (strain ATCC 204508 / S288c) (Baker's yeast).